A 460-amino-acid polypeptide reads, in one-letter code: MLTVGCTLLVALLAAPAVALVLGSCRALEVANGTVTSLPGATVTLICPGKEAAGNVTIHWVYSGSQNREWTTTGNTLVLRDVQLSDTGDYLCSLNDHLVGTVPLLVDVPPEEPKLSCFRKNPLVNAICEWRPSSTPSPTTKAVLFAKKINTTNGKSDFQVPCQYSQQLKSFSCQVEILEGDKVYHIVSLCVANSVGSKSSHNEAFHSLKMVQPDPPANLVVSAIPGRPRWLKVSWQHPETWDPSYYLLQFQLRYRPVWSKEFTVLLLPVAQYQCVIHDALRGVKHVVQVRGKEELDLGQWSEWSPEVTGTPWIAEPRTTPAGILWNPTQVSVEDSANHEDQYESSTEATSVLAPVQESSSMSLPTFLVAGGSLAFGLLLCVFIILRLKQKWKSEAEKESKTTSPPPPPYSLGPLKPTFLLVPLLTPHSSGSDNTVNHSCLGVRDAQSPYDNSNRDYLFPR.

Positions 1–19 (MLTVGCTLLVALLAAPAVA) are cleaved as a signal peptide. The region spanning 20-116 (LVLGSCRALE…DVPPEEPKLS (97 aa)) is the Ig-like C2-type domain. Over 20 to 364 (LVLGSCRALE…VQESSSMSLP (345 aa)) the chain is Extracellular. Disulfide bonds link C25/C190, C47/C92, C117/C128, and C162/C173. N-linked (GlcNAc...) asparagine glycans are attached at residues N32 and N55. Fibronectin type-III domains follow at residues 109–214 (PPEE…VQPD) and 215–313 (PPAN…TPWI). N-linked (GlcNAc...) asparagine glycosylation occurs at N150. Residue N218 is glycosylated (N-linked (GlcNAc...) asparagine). The short motif at 300–304 (WSEWS) is the WSXWS motif element. A helical membrane pass occupies residues 365-385 (TFLVAGGSLAFGLLLCVFIIL). The Cytoplasmic portion of the chain corresponds to 386–460 (RLKQKWKSEA…NSNRDYLFPR (75 aa)).

It belongs to the type I cytokine receptor family. Type 3 subfamily. Component of a hexamer of two molecules each of IL6, IL6R and IL6ST; first binds to IL6 to associate with the signaling subunit IL6ST. Interacts (via N-terminal ectodomain) with SORL1; this interaction may affect IL6-binding to IL6R, hence decrease IL6 'classic-signaling'. In terms of assembly, also interacts with SORL1; this interaction leads to soluble IL6R internalization. May form a trimeric complex with the soluble SORL1 ectodomain and circulating IL6 receptor; this interaction might stabilize circulating IL6, hence promote IL6 'trans-signaling'. A short soluble form is also released from the membrane by proteolysis. The sIL6R is formed by limited proteolysis of membrane-bound receptors, a process referred to as ectodomain shedding. mIL6R is cleaved by the proteases ADAM10 and ADAM17. Post-translationally, glycosylated. Glycosylation is dispensable for transport, signaling, and cell-surface turnover. Glycosylation at Asn-55 is a protease-regulatory exosite. Glycosylation is required for ADAM17-mediated proteolysis. As to expression, expressed by dendritic cells. Detected in the cerebrospinal fluid.

The protein resides in the cell membrane. It localises to the secreted. With respect to regulation, classic and trans-signaling are both inhibited by tocilizumab, a humanized monoclonal antibody that blocks interleukin IL6R signaling. In terms of biological role, part of the receptor for interleukin 6. Binds to IL6 with low affinity, but does not transduce a signal. Signal activation necessitate an association with IL6ST. Activation leads to the regulation of the immune response, acute-phase reactions and hematopoiesis. The interaction with membrane-bound IL6R and IL6ST stimulates 'classic signaling', the restricted expression of the IL6R limits classic IL6 signaling to only a few tissues such as the liver and some cells of the immune system. Whereas the binding of IL6 and soluble IL6R to IL6ST stimulates 'trans-signaling'. Alternatively, 'cluster signaling' occurs when membrane-bound IL6:IL6R complexes on transmitter cells activate IL6ST receptors on neighboring receiver cells. Its function is as follows. Signaling via the membrane-bound IL6R is mostly regenerative and anti-inflammatory. Drives naive CD4(+) T cells to the Th17 lineage, through 'cluster signaling' by dendritic cells. Functionally, soluble form of IL6 receptor (sIL6R) that acts as an agonist of IL6 activity. The IL6:sIL6R complex (hyper-IL6) binds to IL6ST/gp130 on cell surfaces and induces signaling also on cells that do not express membrane-bound IL6R in a process called IL6 'trans-signaling'. sIL6R is causative for the pro-inflammatory properties of IL6 and an important player in the development of chronic inflammatory diseases. In complex with IL6, is required for induction of VEGF production. Plays a protective role during liver injury, being required for maintenance of tissue regeneration. 'Trans-signaling' in central nervous system regulates energy and glucose homeostasis. This chain is Interleukin-6 receptor subunit alpha, found in Mus musculus (Mouse).